We begin with the raw amino-acid sequence, 267 residues long: Phosphonoacetaldehyde hydrolase (267 aa).

Catalysis depends on aspartate 10, which acts as the Nucleophile. Mg(2+) is bound by residues aspartate 10 and alanine 12. Catalysis depends on lysine 51, which acts as the Schiff-base intermediate with substrate. Aspartate 184 lines the Mg(2+) pocket.

This sequence belongs to the HAD-like hydrolase superfamily. PhnX family. As to quaternary structure, homodimer. Requires Mg(2+) as cofactor.

The enzyme catalyses phosphonoacetaldehyde + H2O = acetaldehyde + phosphate + H(+). Its function is as follows. Involved in phosphonate degradation. The sequence is that of Phosphonoacetaldehyde hydrolase from Paraburkholderia xenovorans (strain LB400).